The chain runs to 602 residues: Elongation factor 4 (602 aa).

Residues 8 to 189 form the tr-type G domain; it reads KNIRNFSIIA…KIITTIPAPS (182 aa). GTP contacts are provided by residues 20-25 and 136-139; these read DHGKST and NKID.

It belongs to the TRAFAC class translation factor GTPase superfamily. Classic translation factor GTPase family. LepA subfamily.

It localises to the cell inner membrane. The catalysed reaction is GTP + H2O = GDP + phosphate + H(+). Functionally, required for accurate and efficient protein synthesis under certain stress conditions. May act as a fidelity factor of the translation reaction, by catalyzing a one-codon backward translocation of tRNAs on improperly translocated ribosomes. Back-translocation proceeds from a post-translocation (POST) complex to a pre-translocation (PRE) complex, thus giving elongation factor G a second chance to translocate the tRNAs correctly. Binds to ribosomes in a GTP-dependent manner. The chain is Elongation factor 4 from Helicobacter pylori (strain Shi470).